The sequence spans 821 residues: Calpain-3 (821 aa).

Positions 1-37 are disordered; it reads MPTVISPTVAPRTGAEPRSPGPVPHPAQGKTTEAGGG. The Calpain catalytic domain occupies 74 to 417; sequence LYLDPEFPPD…FTKLEICNLT (344 aa). Residues C129, H334, and N358 contribute to the active site. A domain III region spans residues 418–586; that stretch reads ADALESDKLQ…KRNLSEEAEN (169 aa). A linker region spans residues 587 to 649; that stretch reads TISVDRPVKK…RPGHTDQESE (63 aa). The segment at 603–651 is disordered; that stretch reads IFVSDRANSNKELGVDQEAEEGKDKTGPDKQGESPQPRPGHTDQESEEQ. Basic and acidic residues predominate over residues 622–634; that stretch reads EEGKDKTGPDKQG. EF-hand domains follow at residues 649-683, 692-725, 722-757, and 787-821; these read EEQQ…VVNK, FTLE…KKIK, KKIK…AGFH, and VRLE…TMYA. The segment at 650 to 820 is domain IV; that stretch reads EQQQFRNIFR…VLEWLQLTMY (171 aa). Residues A662, D665, E667, E672, D705, D707, S709, R711, E716, D735, D737, S739, T741, E746, D800, D802, D804, and I806 each coordinate Ca(2+).

Belongs to the peptidase C2 family. Homodimer; via EF-hand domain 4. Interacts with TTN/titin. Interacts with CMYA5; this interaction, which results in CMYA5 proteolysis, may protect CAPN3 from autolysis. Interacts with SIMC1. Interacts with UTP25; the interaction is required for CAPN3 translocation to the nucleolus. As to expression, skeletal muscle.

The protein localises to the cytoplasm. Its subcellular location is the nucleus. It is found in the nucleolus. It catalyses the reaction Broad endopeptidase activity.. Its activity is regulated as follows. Activated by micromolar concentrations of calcium and inhibited by calpastatin. Calcium-regulated non-lysosomal thiol-protease. Proteolytically cleaves CTBP1 at 'His-399'. Mediates, with UTP25, the proteasome-independent degradation of p53/TP53. The sequence is that of Calpain-3 (Capn3) from Rattus norvegicus (Rat).